The primary structure comprises 552 residues: Rhodopsin kinase GRK7 (552 aa).

Residue serine 36 is modified to Phosphoserine; by PKA. The RGS domain occupies 56–176 (FHSLCEQQPI…LASPFYDKFL (121 aa)). The region spanning 191–454 (FEEFRVLGKG…SDDPRKHHFF (264 aa)) is the Protein kinase domain. ATP contacts are provided by residues 197–205 (LGKGGFGEV) and lysine 220. The active-site Proton acceptor is the aspartate 316. In terms of domain architecture, AGC-kinase C-terminal spans 455-520 (KTINFPRLEA…GAVPIAWQEE (66 aa)). The residue at position 549 (cysteine 549) is a Cysteine methyl ester. Residue cysteine 549 is the site of S-geranylgeranyl cysteine attachment. The propeptide at 550–552 (LLL) is removed in mature form.

It belongs to the protein kinase superfamily. AGC Ser/Thr protein kinase family. GPRK subfamily. As to quaternary structure, interacts (when prenylated) with PDE6D; this promotes release from membranes. Autophosphorylated in vitro at Ser-490. Phosphorylation at Ser-36 is regulated by light and activated by cAMP.

Its subcellular location is the membrane. It catalyses the reaction L-threonyl-[rhodopsin] + ATP = O-phospho-L-threonyl-[rhodopsin] + ADP + H(+). The catalysed reaction is L-seryl-[rhodopsin] + ATP = O-phospho-L-seryl-[rhodopsin] + ADP + H(+). Inhibited by phosphorylation of Ser-36. Its function is as follows. Retina-specific kinase involved in the shutoff of the photoresponse and adaptation to changing light conditions via cone opsin phosphorylation, including rhodopsin (RHO). The polypeptide is Rhodopsin kinase GRK7 (GRK7) (Bos taurus (Bovine)).